The sequence spans 483 residues: Glycogen synthase (483 aa).

Position 15 (lysine 15) interacts with ADP-alpha-D-glucose.

It belongs to the glycosyltransferase 1 family. Bacterial/plant glycogen synthase subfamily.

The enzyme catalyses [(1-&gt;4)-alpha-D-glucosyl](n) + ADP-alpha-D-glucose = [(1-&gt;4)-alpha-D-glucosyl](n+1) + ADP + H(+). Its pathway is glycan biosynthesis; glycogen biosynthesis. Its function is as follows. Synthesizes alpha-1,4-glucan chains using ADP-glucose. This Thioalkalivibrio sulfidiphilus (strain HL-EbGR7) protein is Glycogen synthase.